The sequence spans 267 residues: Dihydropteroate synthase (267 aa).

Positions 1–251 (MTKTKIIGIL…NVDLNVKLAQ (251 aa)) constitute a Pterin-binding domain. Residue asparagine 11 participates in Mg(2+) binding. Residues threonine 51, aspartate 84, asparagine 103, aspartate 167, lysine 203, and 239–241 (RVH) contribute to the (7,8-dihydropterin-6-yl)methyl diphosphate site.

It belongs to the DHPS family. Mg(2+) is required as a cofactor.

The enzyme catalyses (7,8-dihydropterin-6-yl)methyl diphosphate + 4-aminobenzoate = 7,8-dihydropteroate + diphosphate. Its pathway is cofactor biosynthesis; tetrahydrofolate biosynthesis; 7,8-dihydrofolate from 2-amino-4-hydroxy-6-hydroxymethyl-7,8-dihydropteridine diphosphate and 4-aminobenzoate: step 1/2. Its function is as follows. Catalyzes the condensation of para-aminobenzoate (pABA) with 6-hydroxymethyl-7,8-dihydropterin diphosphate (DHPt-PP) to form 7,8-dihydropteroate (H2Pte), the immediate precursor of folate derivatives. The sequence is that of Dihydropteroate synthase (folP) from Staphylococcus haemolyticus.